The following is a 151-amino-acid chain: Methylated-DNA--protein-cysteine methyltransferase (151 aa).

Cys119 functions as the Nucleophile; methyl group acceptor in the catalytic mechanism.

It belongs to the MGMT family.

It is found in the cytoplasm. The enzyme catalyses a 6-O-methyl-2'-deoxyguanosine in DNA + L-cysteinyl-[protein] = S-methyl-L-cysteinyl-[protein] + a 2'-deoxyguanosine in DNA. It carries out the reaction a 4-O-methyl-thymidine in DNA + L-cysteinyl-[protein] = a thymidine in DNA + S-methyl-L-cysteinyl-[protein]. In terms of biological role, involved in the cellular defense against the biological effects of O6-methylguanine (O6-MeG) and O4-methylthymine (O4-MeT) in DNA. Repairs the methylated nucleobase in DNA by stoichiometrically transferring the methyl group to a cysteine residue in the enzyme. This is a suicide reaction: the enzyme is irreversibly inactivated. The sequence is that of Methylated-DNA--protein-cysteine methyltransferase from Saccharolobus islandicus (strain L.S.2.15 / Lassen #1) (Sulfolobus islandicus).